We begin with the raw amino-acid sequence, 35 residues long: Water stress-responsive protein 7 (35 aa).

The polypeptide is Water stress-responsive protein 7 (Pinus pinaster (Maritime pine)).